A 333-amino-acid chain; its full sequence is Phenylalanine--tRNA ligase alpha subunit (333 aa).

Glutamate 254 is a binding site for Mg(2+).

Belongs to the class-II aminoacyl-tRNA synthetase family. Phe-tRNA synthetase alpha subunit type 1 subfamily. Tetramer of two alpha and two beta subunits. Requires Mg(2+) as cofactor.

It localises to the cytoplasm. The catalysed reaction is tRNA(Phe) + L-phenylalanine + ATP = L-phenylalanyl-tRNA(Phe) + AMP + diphosphate + H(+). The protein is Phenylalanine--tRNA ligase alpha subunit of Xylella fastidiosa (strain M12).